The following is a 412-amino-acid chain: Dihydrolipoyllysine-residue acetyltransferase component of pyruvate dehydrogenase complex (412 aa).

Residues 2 to 78 (PIKILMPVLS…PVNSLIAVLS (77 aa)) form the Lipoyl-binding domain. An N6-lipoyllysine modification is found at K43. Positions 132-169 (FASPLAKRLAKMGNIRLESVKGSGPHGRIVKQDILSYT) constitute a Peripheral subunit-binding (PSBD) domain. H385 is an active-site residue.

Belongs to the 2-oxoacid dehydrogenase family. In terms of assembly, forms a 24-polypeptide structural core with octahedral symmetry. (R)-lipoate serves as cofactor.

The catalysed reaction is N(6)-[(R)-dihydrolipoyl]-L-lysyl-[protein] + acetyl-CoA = N(6)-[(R)-S(8)-acetyldihydrolipoyl]-L-lysyl-[protein] + CoA. Functionally, the pyruvate dehydrogenase complex catalyzes the overall conversion of pyruvate to acetyl-CoA and CO(2). It contains multiple copies of three enzymatic components: pyruvate dehydrogenase (E1), dihydrolipoamide acetyltransferase (E2) and lipoamide dehydrogenase (E3). This Rickettsia felis (strain ATCC VR-1525 / URRWXCal2) (Rickettsia azadi) protein is Dihydrolipoyllysine-residue acetyltransferase component of pyruvate dehydrogenase complex (pdhC).